The primary structure comprises 240 residues: MSVAAPAHKRILLKLSGEALMGDDAFGINRATIVRMVEEIAEVTRMGVQVAVVIGGGNIFRGVAGGSVGMDRATADYMGMLATVMNALALADAMDKQGLIARVMSAIGIEQVVEPYVRPKALQYLEEGKVVVFAAGTGNPFFTTDTAAALRGAEIGAEVVLKATKVDGVYTADPKKDPTATRYTKLTFDEAMSRNLGILDATAFALCRDQKLPIRVFSIVKHGALKRVVMGEDEGTLVYA.

Residue 14–17 (KLSG) coordinates ATP. Gly56 lines the UMP pocket. Residues Gly57 and Arg61 each contribute to the ATP site. UMP is bound by residues Asp76 and 137–144 (TGNPFFTT). ATP is bound by residues Thr164, Tyr170, and Asp173.

Belongs to the UMP kinase family. Homohexamer.

It is found in the cytoplasm. The enzyme catalyses UMP + ATP = UDP + ADP. It functions in the pathway pyrimidine metabolism; CTP biosynthesis via de novo pathway; UDP from UMP (UMPK route): step 1/1. With respect to regulation, inhibited by UTP. Its function is as follows. Catalyzes the reversible phosphorylation of UMP to UDP. The polypeptide is Uridylate kinase (Paracidovorax citrulli (strain AAC00-1) (Acidovorax citrulli)).